The chain runs to 939 residues: Valine--tRNA ligase (939 aa).

Residues 45–55 (PNVTGTLHMGH) carry the 'HIGH' region motif. A 'KMSKS' region motif is present at residues 549–553 (KMSKS). K552 is an ATP binding site. The stretch at 876–939 (AAETARLRKE…KIRVQLVKLA (64 aa)) forms a coiled coil.

It belongs to the class-I aminoacyl-tRNA synthetase family. ValS type 1 subfamily. As to quaternary structure, monomer.

The protein resides in the cytoplasm. The enzyme catalyses tRNA(Val) + L-valine + ATP = L-valyl-tRNA(Val) + AMP + diphosphate. In terms of biological role, catalyzes the attachment of valine to tRNA(Val). As ValRS can inadvertently accommodate and process structurally similar amino acids such as threonine, to avoid such errors, it has a 'posttransfer' editing activity that hydrolyzes mischarged Thr-tRNA(Val) in a tRNA-dependent manner. The sequence is that of Valine--tRNA ligase from Chromobacterium violaceum (strain ATCC 12472 / DSM 30191 / JCM 1249 / CCUG 213 / NBRC 12614 / NCIMB 9131 / NCTC 9757 / MK).